The following is a 494-amino-acid chain: DNA-directed DNA/RNA polymerase mu (494 aa).

Residues M1–S24 are disordered. S12 bears the Phosphoserine mark. The region spanning P22 to R122 is the BRCT domain. Residues R323–D332 form an involved in ssDNA binding region. Residues D330, D332, and D418 each contribute to the Mg(2+) site.

This sequence belongs to the DNA polymerase type-X family. It depends on Mg(2+) as a cofactor. Expressed in a number of tissues. Abundant in thymus.

The protein localises to the nucleus. It carries out the reaction DNA(n) + a 2'-deoxyribonucleoside 5'-triphosphate = DNA(n+1) + diphosphate. Gap-filling polymerase involved in repair of DNA double-strand breaks by non-homologous end joining (NHEJ). Participates in immunoglobulin (Ig) light chain gene rearrangement in V(D)J recombination. This chain is DNA-directed DNA/RNA polymerase mu (POLM), found in Homo sapiens (Human).